The sequence spans 67 residues: Vespin (67 aa).

Positions 1 to 21 (MHPIIWELSHMVDLQAAAQKL) are cleaved as a signal peptide.

Expressed by the venom gland.

It is found in the secreted. In terms of biological role, shows contractile activity on isolated ileum smooth muscle. This is Vespin from Vespa magnifica (Hornet).